The primary structure comprises 337 residues: Putative carboxypeptidase TP_0688 (337 aa).

Serine 118 (nucleophile) is an active-site residue. Catalysis depends on charge relay system residues glutamate 234 and histidine 302.

Belongs to the peptidase S66 family.

This is Putative carboxypeptidase TP_0688 from Treponema pallidum (strain Nichols).